The sequence spans 245 residues: Putative transport permease YvfS (245 aa).

6 consecutive transmembrane segments (helical) span residues 20–40, 53–73, 103–123, 137–157, 164–184, and 214–234; these read YFVLWSLIMPIAFYYFFTNVV, HYLMSMTVFSVMGSSIMTLGI, IGQSVIHVLSITVIFLFGAII, GLWILFGALPFLALGTLIGLM, AGISNVLYMLLALGGGMWMPF, and GSPTWKNILILIAYMMLFMLL. In terms of domain architecture, ABC transmembrane type-2 spans 20–242; sequence YFVLWSLIMP…LLSKYIRRKQ (223 aa).

The protein belongs to the ABC-2 integral membrane protein family.

Its subcellular location is the cell membrane. The sequence is that of Putative transport permease YvfS (yvfS) from Bacillus subtilis (strain 168).